Here is an 893-residue protein sequence, read N- to C-terminus: Probable disease resistance protein At1g62630 (893 aa).

Residues 24–68 are a coiled coil; the sequence is GSYTHNLEKNLVALETTMEELKAKRDDLLRRLKREEDRGLQRLSE. The NB-ARC domain occupies 136–440; the sequence is TEQASTSAFE…CEEIIDGSEG (305 aa). 179–186 is a binding site for ATP; the sequence is GMGGVGKT. LRR repeat units follow at residues 516–537, 538–559, 571–593, 595–617, 618–640, and 641–663; these read VVRR…YECM, ELTT…SEIK, KLAV…ISNL, SLKY…QELK, KIIH…SSLH, and NLKV…KELE.

This sequence belongs to the disease resistance NB-LRR family.

Probable disease resistance protein. This Arabidopsis thaliana (Mouse-ear cress) protein is Probable disease resistance protein At1g62630.